Here is a 1106-residue protein sequence, read N- to C-terminus: Protein kinase C (1106 aa).

The REM-1 1 domain maps to 1 to 67 (MDGDDLIASV…MRELQLRQMK (67 aa)). Positions 65 to 138 (QMKQEGASPT…PRPFAPVPKA (74 aa)) are disordered. Over residues 79–93 (PPNPDGSAPVPPPKD) the composition is skewed to pro residues. In terms of domain architecture, REM-1 2 spans 149–226 (KYDTPYLGPK…LKRYEDLHVD (78 aa)). Residues 232 to 350 (APDDESLSTP…MRRKKIESEF (119 aa)) enclose the C2 domain. Residues 361–370 (MEHGAAHGRQ) are compositionally biased toward basic and acidic residues. The disordered stretch occupies residues 361–400 (MEHGAAHGRQDAGGAPGSSNRPPSGGHSGGPGQGYAGGAP). Over residues 386 to 400 (GHSGGPGQGYAGGAP) the composition is skewed to gly residues. 2 Phorbol-ester/DAG-type zinc fingers span residues 460 to 508 (GHKF…VTKC) and 528 to 578 (PHRF…PDFC). Polar residues-rich tracts occupy residues 600 to 609 (KSASVSSGLS) and 658 to 668 (YIPPQSPTAAQ). Disordered regions lie at residues 600-625 (KSAS…PQDN) and 658-719 (YIPP…HAHY). Residues 683–693 (AAAAAAAAAAA) show a composition bias toward low complexity. The 260-residue stretch at 781–1040 (FNFLAVLGKG…AQEVMSHAFF (260 aa)) folds into the Protein kinase domain. ATP is bound by residues 787–795 (LGKGNFGKV) and K810. D906 (proton acceptor) is an active-site residue. Residues 1041-1106 (RNINWDDIYH…RGFSYTADFA (66 aa)) enclose the AGC-kinase C-terminal domain. A Phosphothreonine modification is found at T1082. S1100 bears the Phosphoserine mark. Y1101 is modified (phosphotyrosine).

It belongs to the protein kinase superfamily. AGC Ser/Thr protein kinase family. PKC subfamily. As to quaternary structure, interacts with hsp90.

The catalysed reaction is L-seryl-[protein] + ATP = O-phospho-L-seryl-[protein] + ADP + H(+). The enzyme catalyses L-threonyl-[protein] + ATP = O-phospho-L-threonyl-[protein] + ADP + H(+). In terms of biological role, protein kinase C; part of cell wall integrity (CWI) signaling pathway composed of pkcA, the bck1-mkk2-mpka MAPK cascade and the downstream rlmA transcription regulator. The CWI signaling pathway regulates cell wall integrity and pyomelanin formation. CWI also controls oxidative stress response, gliotoxin production, iron adaptation and asexual development. Finally, CWI is constitutively required for A.fumigatus to cope with the temperature increase found in the mammalian lung environment, during infection. Modulates the expression of fumiquinazoline cluster during conidiogenesis. The protein is Protein kinase C of Aspergillus fumigatus (strain ATCC MYA-4609 / CBS 101355 / FGSC A1100 / Af293) (Neosartorya fumigata).